The primary structure comprises 341 residues: MTDGILGKAATMEIPIHGNGEARQLPEDDGLEQDLQQVMVSGPNLNETSIVSGGYGGSGDGLIPTGSGRHPSHSTTPSGPGDEVARGIAGEKFDIVKKWGINTYKCTKQLLSERFGRGSRTVDLELELQIELLRETKRKYESVLQLGRALTAHLYSLLQTQHALGDAFADLSQKSPELQEEFGYNAETQKLLCKNGETLLGAVNFFVSSINTLVTKTMEDTLMTVKQYEAARLEYDAYRTDLEELSLGPRDAGTRGRLESAQATFQAHRDKYEKLRGDVAIKLKFLEENKIKVMHKQLLLFHNAVSAYFAGNQKQLEQTLQQFNIKLRPPGAEKPSWLEEQ.

A disordered region spans residues 46–85; that stretch reads NETSIVSGGYGGSGDGLIPTGSGRHPSHSTTPSGPGDEVA. The residue at position 72 (serine 72) is a Phosphoserine. Threonine 76 carries the phosphothreonine modification. In terms of domain architecture, AH spans 121–321; that stretch reads TVDLELELQI…NQKQLEQTLQ (201 aa).

Forms homodimers or heterodimers with ARFIP1. Interacts with RAC1. Specifically binds to GTP-bound ARF1 and ARF6, but binds to RAC1.GTP and RAC1.GDP with similar affinities. Interacts with ARL1. Interacts (via N-terminus) with IKBKB and IKBKG; these interactions inhibit activation of NF-kappa-B.

Its subcellular location is the golgi apparatus. It is found in the trans-Golgi network membrane. In terms of biological role, plays a role in constitutive metalloproteinase (MMP) secretion from the trans Golgi network. May have important functions during vesicle biogenesis at certain cargo subdomains, which could be predominantly utilized by secreted MMPs, such as MMP7 and MMP2. Also involved in autophagy by regulating the starvation-dependent trafficking of ATG9A vesicles which deliver the phosphatidylinositol 4-kinase beta (PI4KB) to the autophagosome initiation site. Involved in phagophore growth during mitophagy by regulating ATG9A trafficking to mitochondria. In addition, plays a role in NF-kappa-B inhibition by interacting with IKBKB and IKBKG. The protein is Arfaptin-2 of Homo sapiens (Human).